We begin with the raw amino-acid sequence, 301 residues long: Probable 5-dehydro-4-deoxyglucarate dehydratase (301 aa).

This sequence belongs to the DapA family.

The catalysed reaction is 5-dehydro-4-deoxy-D-glucarate + H(+) = 2,5-dioxopentanoate + CO2 + H2O. Its pathway is carbohydrate acid metabolism; D-glucarate degradation; 2,5-dioxopentanoate from D-glucarate: step 2/2. The chain is Probable 5-dehydro-4-deoxyglucarate dehydratase from Rhizobium meliloti (strain 1021) (Ensifer meliloti).